We begin with the raw amino-acid sequence, 232 residues long: Phosphatidylserine decarboxylase proenzyme (232 aa).

S190 functions as the Schiff-base intermediate with substrate; via pyruvic acid in the catalytic mechanism. Position 190 is a pyruvic acid (Ser); by autocatalysis (S190).

Belongs to the phosphatidylserine decarboxylase family. PSD-A subfamily. In terms of assembly, heterodimer of a large membrane-associated beta subunit and a small pyruvoyl-containing alpha subunit. It depends on pyruvate as a cofactor. Post-translationally, is synthesized initially as an inactive proenzyme. Formation of the active enzyme involves a self-maturation process in which the active site pyruvoyl group is generated from an internal serine residue via an autocatalytic post-translational modification. Two non-identical subunits are generated from the proenzyme in this reaction, and the pyruvate is formed at the N-terminus of the alpha chain, which is derived from the carboxyl end of the proenzyme. The post-translation cleavage follows an unusual pathway, termed non-hydrolytic serinolysis, in which the side chain hydroxyl group of the serine supplies its oxygen atom to form the C-terminus of the beta chain, while the remainder of the serine residue undergoes an oxidative deamination to produce ammonia and the pyruvoyl prosthetic group on the alpha chain.

It localises to the cell membrane. It carries out the reaction a 1,2-diacyl-sn-glycero-3-phospho-L-serine + H(+) = a 1,2-diacyl-sn-glycero-3-phosphoethanolamine + CO2. It functions in the pathway phospholipid metabolism; phosphatidylethanolamine biosynthesis; phosphatidylethanolamine from CDP-diacylglycerol: step 2/2. Its function is as follows. Catalyzes the formation of phosphatidylethanolamine (PtdEtn) from phosphatidylserine (PtdSer). This Cereibacter sphaeroides (strain ATCC 17025 / ATH 2.4.3) (Rhodobacter sphaeroides) protein is Phosphatidylserine decarboxylase proenzyme.